A 745-amino-acid chain; its full sequence is 1,4-alpha-glucan branching enzyme GlgB (745 aa).

Asp416 serves as the catalytic Nucleophile. The active-site Proton donor is Glu469.

Belongs to the glycosyl hydrolase 13 family. GlgB subfamily. Monomer.

The enzyme catalyses Transfers a segment of a (1-&gt;4)-alpha-D-glucan chain to a primary hydroxy group in a similar glucan chain.. The protein operates within glycan biosynthesis; glycogen biosynthesis. In terms of biological role, catalyzes the formation of the alpha-1,6-glucosidic linkages in glycogen by scission of a 1,4-alpha-linked oligosaccharide from growing alpha-1,4-glucan chains and the subsequent attachment of the oligosaccharide to the alpha-1,6 position. This Shewanella sp. (strain W3-18-1) protein is 1,4-alpha-glucan branching enzyme GlgB.